A 172-amino-acid polypeptide reads, in one-letter code: Sec-independent protein translocase protein TatB (172 aa).

The helical transmembrane segment at 1 to 21 threads the bilayer; that stretch reads MFDIGWSELLVIGVVALIAIG.

Belongs to the TatB family. As to quaternary structure, the Tat system comprises two distinct complexes: a TatABC complex, containing multiple copies of TatA, TatB and TatC subunits, and a separate TatA complex, containing only TatA subunits. Substrates initially bind to the TatABC complex, which probably triggers association of the separate TatA complex to form the active translocon.

It is found in the cell inner membrane. Part of the twin-arginine translocation (Tat) system that transports large folded proteins containing a characteristic twin-arginine motif in their signal peptide across membranes. Together with TatC, TatB is part of a receptor directly interacting with Tat signal peptides. TatB may form an oligomeric binding site that transiently accommodates folded Tat precursor proteins before their translocation. The chain is Sec-independent protein translocase protein TatB from Rhodopseudomonas palustris (strain BisB18).